Here is a 123-residue protein sequence, read N- to C-terminus: Defensin beta 118 (123 aa).

The first 19 residues, 1–19 (MKLLLLALPMLVLLPQVIP), serve as a signal peptide directing secretion. 3 cysteine pairs are disulfide-bonded: Cys-27-Cys-54, Cys-34-Cys-48, and Cys-38-Cys-55. Positions 65-123 (VPATSPTPLSDSTPGIIDDILTVRFTTDYFEVSSKKDMVEESEAGRGTETSLPNVHHSS) are excised as a propeptide. Basic and acidic residues predominate over residues 100 to 110 (KDMVEESEAGR). Residues 100-123 (KDMVEESEAGRGTETSLPNVHHSS) form a disordered region. Polar residues predominate over residues 112-123 (TETSLPNVHHSS).

Belongs to the beta-defensin family. Post-translationally, the three-dimensional structure formed by the three intramolecular disulfide bridges is indispensable for antimicrobial activity. High-level and epididymis-specific expression. Most abundant in the epithelium of the caput and present in the epididymis lumen and bound to sperm. Also expressed in pancreas.

The protein localises to the secreted. Host defense peptide that exhibits antimicrobial activity against both Gram-negative bacteria, such as E.coli and S.typhimurium, and Gram-positive bacteria, such as S.aureus and B.subtilis. Inhibits cell adhesion of E.coli on intestinal epithelial enterocytes. Causes rapid permeabilization of both the outer and inner membrane of E.coli, leading to morphological alterations on the bacterial surface. Binds to bacterial lipopolysaccharides (LPS) with high affinity, and may thereby be involved in immunoregulation through LPS neutralization. May contribute to epididymal innate immunity and protect the sperm against attack by microorganisms. The chain is Defensin beta 118 (DEFB118) from Homo sapiens (Human).